We begin with the raw amino-acid sequence, 186 residues long: Peptidyl-tRNA hydrolase (186 aa).

Tyrosine 14 contacts tRNA. Histidine 19 acts as the Proton acceptor in catalysis. TRNA is bound by residues tyrosine 61, asparagine 63, and asparagine 107.

This sequence belongs to the PTH family. Monomer.

It localises to the cytoplasm. It catalyses the reaction an N-acyl-L-alpha-aminoacyl-tRNA + H2O = an N-acyl-L-amino acid + a tRNA + H(+). Functionally, hydrolyzes ribosome-free peptidyl-tRNAs (with 1 or more amino acids incorporated), which drop off the ribosome during protein synthesis, or as a result of ribosome stalling. Catalyzes the release of premature peptidyl moieties from peptidyl-tRNA molecules trapped in stalled 50S ribosomal subunits, and thus maintains levels of free tRNAs and 50S ribosomes. This Helicobacter pylori (strain J99 / ATCC 700824) (Campylobacter pylori J99) protein is Peptidyl-tRNA hydrolase.